The following is a 685-amino-acid chain: DNA topoisomerase 4 subunit B (685 aa).

Residues 389-400 show a composition bias toward basic and acidic residues; the sequence is EAARKAREESRN. Positions 389–427 are disordered; it reads EAARKAREESRNGKKRKKGESLLSGKLTPAQSRNPKKNE. The Toprim domain maps to 426 to 540; the sequence is NELYLVEGDS…AGKVYIALPP (115 aa). Mg(2+)-binding residues include Glu432, Asp505, and Asp507. 2 stretches are compositionally biased toward acidic residues: residues 644–654 and 673–685; these read GSILDRSEEDT and QTDD…FDIE. Residues 644-685 form a disordered region; sequence GSILDRSEEDTSAPTGESLLDAEKTKEAEQTDDTEISLFDIE.

Belongs to the type II topoisomerase family. ParE type 1 subfamily. In terms of assembly, heterotetramer composed of ParC and ParE. Mg(2+) is required as a cofactor. It depends on Mn(2+) as a cofactor. The cofactor is Ca(2+).

It catalyses the reaction ATP-dependent breakage, passage and rejoining of double-stranded DNA.. With respect to regulation, pyrrolopyrimidines inhibit both GyrB and its paralog in topoisomerase IV (parE). Topoisomerase IV is essential for chromosome segregation. It relaxes supercoiled DNA. Performs the decatenation events required during the replication of a circular DNA molecule. In Enterococcus faecalis (strain ATCC 700802 / V583), this protein is DNA topoisomerase 4 subunit B.